Here is a 354-residue protein sequence, read N- to C-terminus: MTALKNDRFLRALLKQPVDVTPVWMMRQAGRYLPEYRASRASAGDFMSLCKNPQFACEVTLQPLDRYPLDAAILFSDILTIPDAMGQGLYFETGEGPRFRKTVSTLADIEALPIPDAQQDLGYVMDAVSTIRRELNGRVPLIGFAGSPWTLATYMVEGGSSKDFRKSKAMLYDNPQAMHLLLDKLAQSVTSYLNGQILAGAQAVQIFDSWGGSLSSAAYQEFSLAYMRKIVSGLIRENDGRKVPVIVFTKGGGLWLESIADIGADTLGLDWTCDIGEARQRVGSKVSLQGNMDPTVLYARPEAIRQEVARILASYGSGTGHVFNLGHGITPEVDPANAGAFINAVHELSAQYHV.

Substrate is bound by residues R27 to R31, D77, Y154, S209, and H327.

The protein belongs to the uroporphyrinogen decarboxylase family. As to quaternary structure, homodimer.

Its subcellular location is the cytoplasm. It catalyses the reaction uroporphyrinogen III + 4 H(+) = coproporphyrinogen III + 4 CO2. It functions in the pathway porphyrin-containing compound metabolism; protoporphyrin-IX biosynthesis; coproporphyrinogen-III from 5-aminolevulinate: step 4/4. Functionally, catalyzes the decarboxylation of four acetate groups of uroporphyrinogen-III to yield coproporphyrinogen-III. The chain is Uroporphyrinogen decarboxylase from Pseudomonas syringae pv. syringae (strain B728a).